The chain runs to 67 residues: Large ribosomal subunit protein uL29 (67 aa).

The protein belongs to the universal ribosomal protein uL29 family.

The protein is Large ribosomal subunit protein uL29 of Alkaliphilus metalliredigens (strain QYMF).